Here is a 185-residue protein sequence, read N- to C-terminus: Ribosome-recycling factor (185 aa).

Positions 137 to 162 (DSIDKMVKDGEVGEDEGRRAEKELDD) are disordered.

The protein belongs to the RRF family.

The protein resides in the cytoplasm. In terms of biological role, responsible for the release of ribosomes from messenger RNA at the termination of protein biosynthesis. May increase the efficiency of translation by recycling ribosomes from one round of translation to another. The sequence is that of Ribosome-recycling factor from Streptomyces coelicolor (strain ATCC BAA-471 / A3(2) / M145).